We begin with the raw amino-acid sequence, 442 residues long: MKKVFIRTFGCQMNEYDSDKMLAVLAEEHGGIEQVTQADEADIILFNTCSVREKAQEKVFSDLGRVRPLKEKNPGLIIGVAGCVASQEGENIIKRAPYVDVVFGPQTLHRLPKMIVDKETSGLSQVDISFPEIEKFDHLPPARVEGGAAFVSIMEGCSKYCSFCVVPYTRGEEFSRPLNDVLTEIANLAQQGVKEINLLGQNVNAYCGEMDDGEICDFATLLRIVHEIPGIERMRFTTSHPREFTDSIIECYRDLPKLVSHLHLPIQSGSDRVLSAMKRGYTALEYKSIIRKLRAIRPDLCLSSDFIVGFPGETEREFEQTLKLVKDIAFDLSFVFIYSPRPGTPAANLHDDTPHEEKVRRLEALNEVIEAETARINQTMIGTVQRCLVEGISKKDPDQLQARTANNRVVNFTGTPNMINQMIDLEITEAYTFSLRGKVVEA.

An MTTase N-terminal domain is found at 2–120 (KKVFIRTFGC…LPKMIVDKET (119 aa)). 6 residues coordinate [4Fe-4S] cluster: Cys-11, Cys-49, Cys-83, Cys-157, Cys-161, and Cys-164. Residues 143-375 (RVEGGAAFVS…NEVIEAETAR (233 aa)) enclose the Radical SAM core domain. The 64-residue stretch at 378–441 (QTMIGTVQRC…TFSLRGKVVE (64 aa)) folds into the TRAM domain.

Belongs to the methylthiotransferase family. MiaB subfamily. Monomer. It depends on [4Fe-4S] cluster as a cofactor.

It localises to the cytoplasm. The enzyme catalyses N(6)-dimethylallyladenosine(37) in tRNA + (sulfur carrier)-SH + AH2 + 2 S-adenosyl-L-methionine = 2-methylsulfanyl-N(6)-dimethylallyladenosine(37) in tRNA + (sulfur carrier)-H + 5'-deoxyadenosine + L-methionine + A + S-adenosyl-L-homocysteine + 2 H(+). Functionally, catalyzes the methylthiolation of N6-(dimethylallyl)adenosine (i(6)A), leading to the formation of 2-methylthio-N6-(dimethylallyl)adenosine (ms(2)i(6)A) at position 37 in tRNAs that read codons beginning with uridine. The protein is tRNA-2-methylthio-N(6)-dimethylallyladenosine synthase of Neisseria meningitidis serogroup C (strain 053442).